The primary structure comprises 430 residues: Cell division protein FtsZ (430 aa).

GTP is bound by residues 76–80 (GGGCN), 163–165 (GTG), E194, R198, and D242. Residues 374–418 (KEKPQAKTSSKPVLSGPPAGVETVPSTTTPEDPLGEIPMAPELDI) are disordered.

Belongs to the FtsZ family. As to quaternary structure, homodimer. Polymerizes to form a dynamic ring structure in a strictly GTP-dependent manner. Interacts directly with several other division proteins.

The protein localises to the cytoplasm. Essential cell division protein that forms a contractile ring structure (Z ring) at the future cell division site. The regulation of the ring assembly controls the timing and the location of cell division. One of the functions of the FtsZ ring is to recruit other cell division proteins to the septum to produce a new cell wall between the dividing cells. Binds GTP and shows GTPase activity. The protein is Cell division protein FtsZ of Synechocystis sp. (strain ATCC 27184 / PCC 6803 / Kazusa).